The primary structure comprises 56 residues: Ovomucoid (56 aa).

The Kazal-like domain occupies 6–56 (VDCSEYPKPACTLEYVPICGSDNKTYGNKCNFCNAVVESNGTLTLSHFGKC). 3 disulfide bridges follow: C8–C38, C16–C35, and C24–C56. N-linked (GlcNAc...) asparagine glycosylation occurs at N45.

It localises to the secreted. The protein is Ovomucoid of Cyrtonyx montezumae (Montezuma quail).